The primary structure comprises 635 residues: Threonine--tRNA ligase (635 aa).

Residues 1-61 (MIQITLPDNS…DHDARLQIIT (61 aa)) form the TGS domain. Residues 242–533 (DHRKLGKELD…LIEHHAGALP (292 aa)) form a catalytic region. Zn(2+)-binding residues include Cys333, His384, and His510.

The protein belongs to the class-II aminoacyl-tRNA synthetase family. Homodimer. Requires Zn(2+) as cofactor.

Its subcellular location is the cytoplasm. It carries out the reaction tRNA(Thr) + L-threonine + ATP = L-threonyl-tRNA(Thr) + AMP + diphosphate + H(+). Functionally, catalyzes the attachment of threonine to tRNA(Thr) in a two-step reaction: L-threonine is first activated by ATP to form Thr-AMP and then transferred to the acceptor end of tRNA(Thr). Also edits incorrectly charged L-seryl-tRNA(Thr). In Variovorax paradoxus (strain S110), this protein is Threonine--tRNA ligase.